Consider the following 415-residue polypeptide: Histidine--tRNA ligase (415 aa).

The protein belongs to the class-II aminoacyl-tRNA synthetase family. As to quaternary structure, homodimer.

Its subcellular location is the cytoplasm. It catalyses the reaction tRNA(His) + L-histidine + ATP = L-histidyl-tRNA(His) + AMP + diphosphate + H(+). The protein is Histidine--tRNA ligase of Clostridium botulinum (strain ATCC 19397 / Type A).